Consider the following 252-residue polypeptide: Thiazole synthase (252 aa).

Lys-98 acts as the Schiff-base intermediate with DXP in catalysis. 1-deoxy-D-xylulose 5-phosphate is bound by residues Gly-159, 185-186 (AG), and 207-208 (AS).

Belongs to the ThiG family. Homotetramer. Forms heterodimers with either ThiH or ThiS.

Its subcellular location is the cytoplasm. The enzyme catalyses [ThiS sulfur-carrier protein]-C-terminal-Gly-aminoethanethioate + 2-iminoacetate + 1-deoxy-D-xylulose 5-phosphate = [ThiS sulfur-carrier protein]-C-terminal Gly-Gly + 2-[(2R,5Z)-2-carboxy-4-methylthiazol-5(2H)-ylidene]ethyl phosphate + 2 H2O + H(+). It participates in cofactor biosynthesis; thiamine diphosphate biosynthesis. Functionally, catalyzes the rearrangement of 1-deoxy-D-xylulose 5-phosphate (DXP) to produce the thiazole phosphate moiety of thiamine. Sulfur is provided by the thiocarboxylate moiety of the carrier protein ThiS. In vitro, sulfur can be provided by H(2)S. The polypeptide is Thiazole synthase (Mycobacterium tuberculosis (strain ATCC 25177 / H37Ra)).